The following is a 679-amino-acid chain: Membrane-spanning 4-domains subfamily A member 14 (679 aa).

A run of 4 helical transmembrane segments spans residues 50–70, 76–96, 110–130, and 141–161; these read ILLA…YIGF, LVVL…TGYL, VTGM…FTIL, and MPSF…LFFL. Disordered regions lie at residues 218 to 259, 331 to 363, 469 to 491, and 505 to 633; these read VSQP…EKKP, SEQT…ILSQ, KEWK…LNQQ, and VQAK…QAQV. Basic and acidic residues predominate over residues 224 to 234; the sequence is KGREFVPDEQK. A compositionally biased stretch (low complexity) spans 337–348; it reads SKSTSSHVKQSS. Positions 469–478 are enriched in basic and acidic residues; it reads KEWKSEEELH. Composition is skewed to polar residues over residues 519–535 and 550–563; these read DQQS…SLDQ and KQAQ…QLPD. Residues 580–601 are compositionally biased toward basic and acidic residues; the sequence is QSKDGQVKDQQTDKEQNSKKQT. Residues 619–632 show a composition bias toward polar residues; it reads GQFQNVQAEGQQAQ.

It belongs to the MS4A family.

The protein localises to the membrane. May be involved in signal transduction as a component of a multimeric receptor complex. In Homo sapiens (Human), this protein is Membrane-spanning 4-domains subfamily A member 14 (MS4A14).